The chain runs to 67 residues: Conotoxin ArMLKM-01 (67 aa).

The signal sequence occupies residues Met-1–Thr-24. Positions Asp-25 to Val-51 are excised as a propeptide. Disulfide bonds link Cys-54/Cys-65, Cys-55/Cys-63, and Cys-58/Cys-66.

This sequence belongs to the conotoxin M superfamily. As to expression, expressed by the venom duct.

Its subcellular location is the secreted. The sequence is that of Conotoxin ArMLKM-01 from Conus arenatus (Sand-dusted cone).